Consider the following 342-residue polypeptide: Tetraacyldisaccharide 4'-kinase (342 aa).

An ATP-binding site is contributed by 68 to 75 (TVGGTGKT).

It belongs to the LpxK family.

The enzyme catalyses a lipid A disaccharide + ATP = a lipid IVA + ADP + H(+). Its pathway is glycolipid biosynthesis; lipid IV(A) biosynthesis; lipid IV(A) from (3R)-3-hydroxytetradecanoyl-[acyl-carrier-protein] and UDP-N-acetyl-alpha-D-glucosamine: step 6/6. Its function is as follows. Transfers the gamma-phosphate of ATP to the 4'-position of a tetraacyldisaccharide 1-phosphate intermediate (termed DS-1-P) to form tetraacyldisaccharide 1,4'-bis-phosphate (lipid IVA). This Burkholderia cenocepacia (strain ATCC BAA-245 / DSM 16553 / LMG 16656 / NCTC 13227 / J2315 / CF5610) (Burkholderia cepacia (strain J2315)) protein is Tetraacyldisaccharide 4'-kinase.